Reading from the N-terminus, the 195-residue chain is Imidazoleglycerol-phosphate dehydratase (195 aa).

It belongs to the imidazoleglycerol-phosphate dehydratase family.

Its subcellular location is the cytoplasm. The catalysed reaction is D-erythro-1-(imidazol-4-yl)glycerol 3-phosphate = 3-(imidazol-4-yl)-2-oxopropyl phosphate + H2O. It functions in the pathway amino-acid biosynthesis; L-histidine biosynthesis; L-histidine from 5-phospho-alpha-D-ribose 1-diphosphate: step 6/9. This is Imidazoleglycerol-phosphate dehydratase from Thiobacillus denitrificans (strain ATCC 25259 / T1).